Consider the following 274-residue polypeptide: Large ribosomal subunit protein uL2 (274 aa).

A disordered region spans residues 221–274 (RGTAMNPVDHPHGGGEGRNFGKHPVTPWGVQTKGKKTRNNKRTDKSIVRRRSKK).

This sequence belongs to the universal ribosomal protein uL2 family. As to quaternary structure, part of the 50S ribosomal subunit. Forms a bridge to the 30S subunit in the 70S ribosome.

Its function is as follows. One of the primary rRNA binding proteins. Required for association of the 30S and 50S subunits to form the 70S ribosome, for tRNA binding and peptide bond formation. It has been suggested to have peptidyltransferase activity; this is somewhat controversial. Makes several contacts with the 16S rRNA in the 70S ribosome. This is Large ribosomal subunit protein uL2 from Hamiltonella defensa subsp. Acyrthosiphon pisum (strain 5AT).